We begin with the raw amino-acid sequence, 597 residues long: Probable translation initiation factor IF-2 (597 aa).

The 217-residue stretch at 13 to 229 (LRTPIVCVMG…LLGLAQKFLE (217 aa)) folds into the tr-type G domain. The G1 stretch occupies residues 22-29 (GHVDHGKT). GTP is bound at residue 22-29 (GHVDHGKT). The segment at 47–51 (AITQH) is G2. The interval 84-87 (DTPG) is G3. GTP-binding positions include 84–88 (DTPGH) and 138–141 (NKID). The tract at residues 138–141 (NKID) is G4. Residues 206–208 (SAV) are G5.

The protein belongs to the TRAFAC class translation factor GTPase superfamily. Classic translation factor GTPase family. IF-2 subfamily.

Its function is as follows. Function in general translation initiation by promoting the binding of the formylmethionine-tRNA to ribosomes. Seems to function along with eIF-2. The polypeptide is Probable translation initiation factor IF-2 (Methanosarcina acetivorans (strain ATCC 35395 / DSM 2834 / JCM 12185 / C2A)).